Consider the following 259-residue polypeptide: Global transcriptional regulator CodY (259 aa).

Residues 1–155 (MSLLSRMRKI…GATVVGMEIL (155 aa)) form a GAF domain region. Positions 203–222 (ASKIADRVGITRSVIVNALR) form a DNA-binding region, H-T-H motif. Serine 215 is modified (phosphoserine).

This sequence belongs to the CodY family.

The protein localises to the cytoplasm. Its function is as follows. DNA-binding global transcriptional regulator which is involved in the adaptive response to starvation and acts by directly or indirectly controlling the expression of numerous genes in response to nutrient availability. During rapid exponential growth, CodY is highly active and represses genes whose products allow adaptation to nutrient depletion. This chain is Global transcriptional regulator CodY, found in Halalkalibacterium halodurans (strain ATCC BAA-125 / DSM 18197 / FERM 7344 / JCM 9153 / C-125) (Bacillus halodurans).